A 154-amino-acid chain; its full sequence is Egg-lysin (154 aa).

An N-terminal signal peptide occupies residues 1–18; the sequence is MKLFVLCIFAMMATLAMS.

In terms of assembly, homodimer. Sperm.

In terms of biological role, dissolves the egg vitelline layer nonenzymatically during fertilization. It creates a hole of about 3 mu-m in diameter through which the sperm pass. The chain is Egg-lysin from Haliotis kamtschatkana (Pinto abalone).